The primary structure comprises 274 residues: Putative pyruvate, phosphate dikinase regulatory protein (274 aa).

153–160 (GISRTSKT) is an ADP binding site.

Belongs to the pyruvate, phosphate/water dikinase regulatory protein family. PDRP subfamily.

It catalyses the reaction N(tele)-phospho-L-histidyl/L-threonyl-[pyruvate, phosphate dikinase] + ADP = N(tele)-phospho-L-histidyl/O-phospho-L-threonyl-[pyruvate, phosphate dikinase] + AMP + H(+). The catalysed reaction is N(tele)-phospho-L-histidyl/O-phospho-L-threonyl-[pyruvate, phosphate dikinase] + phosphate + H(+) = N(tele)-phospho-L-histidyl/L-threonyl-[pyruvate, phosphate dikinase] + diphosphate. Bifunctional serine/threonine kinase and phosphorylase involved in the regulation of the pyruvate, phosphate dikinase (PPDK) by catalyzing its phosphorylation/dephosphorylation. In Bartonella tribocorum (strain CIP 105476 / IBS 506), this protein is Putative pyruvate, phosphate dikinase regulatory protein.